The sequence spans 419 residues: Dual specificity protein phosphatase 7 (419 aa).

The interval 1–47 (MKNQLRGPPARAHMSTSGAAAAGGTRAGSEPGAGSGSGAGTGAGAAT) is disordered. Over residues 10-29 (ARAHMSTSGAAAAGGTRAGS) the composition is skewed to low complexity. The span at 31–47 (PGAGSGSGAGTGAGAAT) shows a compositional bias: gly residues. A Rhodanese domain is found at 68-187 (GGASLLLLDC…FQTEYSEHCE (120 aa)). Residues 216 to 240 (CSDGESDRELPSSATESDGSPVPSS) are disordered. Residues 227 to 240 (SSATESDGSPVPSS) show a composition bias toward polar residues. The Tyrosine-protein phosphatase domain maps to 244 to 387 (FPVQILPYLY…LLDFERTLGL (144 aa)). The active-site Phosphocysteine intermediate is the C331. 331–337 (CLAGISR) is a substrate binding site.

The protein belongs to the protein-tyrosine phosphatase family. Non-receptor class dual specificity subfamily. Interacts with MAPK1/ERK2; the interaction enhances DUSP7 phosphatase activity. As to expression, strongly expressed in liver. Expressed at significantly higher levels in malignant hematopoietic cells than in corresponding non-malignant cells.

It localises to the cytoplasm. It carries out the reaction O-phospho-L-tyrosyl-[protein] + H2O = L-tyrosyl-[protein] + phosphate. The enzyme catalyses O-phospho-L-seryl-[protein] + H2O = L-seryl-[protein] + phosphate. The catalysed reaction is O-phospho-L-threonyl-[protein] + H2O = L-threonyl-[protein] + phosphate. Strongly inhibited by sodium orthovanadate. Dual specificity protein phosphatase. Shows high activity towards MAPK1/ERK2. Also has lower activity towards MAPK14 and MAPK8. In arrested oocytes, plays a role in meiotic resumption. Promotes nuclear envelope breakdown and activation of the CDK1/Cyclin-B complex in oocytes, probably by dephosphorylating and inactivating the conventional protein kinase C (cPKC) isozyme PRKCB. May also inactivate PRKCA and/or PRKCG. Also important in oocytes for normal chromosome alignment on the metaphase plate and progression to anaphase, where it might regulate activity of the spindle-assembly checkpoint (SAC) complex. This Homo sapiens (Human) protein is Dual specificity protein phosphatase 7.